A 428-amino-acid polypeptide reads, in one-letter code: Histidine--tRNA ligase (428 aa).

It belongs to the class-II aminoacyl-tRNA synthetase family. Homodimer.

The protein resides in the cytoplasm. The enzyme catalyses tRNA(His) + L-histidine + ATP = L-histidyl-tRNA(His) + AMP + diphosphate + H(+). This chain is Histidine--tRNA ligase, found in Halalkalibacterium halodurans (strain ATCC BAA-125 / DSM 18197 / FERM 7344 / JCM 9153 / C-125) (Bacillus halodurans).